The following is a 263-amino-acid chain: Polyglutamine-binding protein 1 (263 aa).

A WW domain is found at 46-80 (EGLPPSWYKVFDPSCGLPYYWNVETDLVSWLSPHD). Positions 94–263 (NNNADAEDKS…AEASRTKQQD (170 aa)) are disordered. Residues 99-173 (AEDKSDRNLE…DKADREEGKD (75 aa)) show a composition bias toward basic and acidic residues. Residues 104–110 (DRNLEKV) form a 1-1; approximate repeat. Residues 104–138 (DRNLEKVDRNHEKSDRSHEKPDRSHEKADRNHEKN) form a 5 X 7 AA approximate tandem repeats of D-R-[NS]-H-E-K-S region. The stretch at 111–117 (DRNHEKS) is one 1-2 repeat. A 1-3; approximate repeat occupies 118–124 (DRSHEKP). The 1-4; approximate repeat unit spans residues 125 to 131 (DRSHEKA). One copy of the 1-5; approximate repeat lies at 132 to 138 (DRNHEKN). 9 tandem repeats follow at residues 139–140 (DR), 141–142 (ER), 143–144 (ER), 150–151 (DR), 152–153 (ER), 154–155 (DR), 156–157 (DR), 158–159 (ER), and 160–161 (ER). The segment at 139-144 (DRERER) is 3 X 2 AA tandem repeats of [DE]-R. The 6 X 2 AA tandem repeats of [DE]-R stretch occupies residues 150–161 (DRERDRDRERER). The important for interaction with TXNL4A stretch occupies residues 243–253 (YPSPGAVLRAN). A Phosphoserine modification is found at S245.

As to quaternary structure, interacts with POU3F2/Brn-2, ATXN1, TXNL4A, HTT and AR. Interaction with ATXN1 correlates positively with the length of the polyglutamine tract. Interacts with RNA polymerase II large subunit in a phosphorylation-dependent manner. Forms a ternary complex with ATXN1 mutant and phosphorylated RNA polymerase II. Interacts (via C-terminus) with TXNL4A and CD2BP2. Interacts (via WW domain) with ATN1 and SF3B1, and may interact with additional splice factors. Interacts (via WW domain) with WBP11; Leading to reduce interaction between PQBP1 and TXNL4A. Interacts with CAPRIN1. Interacts with DDX1. Interacts with SFPQ. Interacts with KHSRP. Detected in brain cortex and hippocampus neurons (at protein level). Expressed in brain with high level in cerebellar cortex, hippocampus and olfactory bulb.

It localises to the nucleus. Its subcellular location is the nucleus speckle. It is found in the cytoplasmic granule. In terms of biological role, intrinsically disordered protein that acts as a scaffold, and which is involved in different processes, such as pre-mRNA splicing, transcription regulation, innate immunity and neuron development. Interacts with splicing-related factors via the intrinsically disordered region and regulates alternative splicing of target pre-mRNA species. May suppress the ability of POU3F2 to transactivate the DRD1 gene in a POU3F2 dependent manner. Can activate transcription directly or via association with the transcription machinery. May be involved in ATXN1 mutant-induced cell death. The interaction with ATXN1 mutant reduces levels of phosphorylated RNA polymerase II large subunit. Involved in the assembly of cytoplasmic stress granule, possibly by participating in the transport of neuronal RNA granules. Also acts as an innate immune sensor of infection by retroviruses, by detecting the presence of reverse-transcribed DNA in the cytosol. Directly binds retroviral reverse-transcribed DNA in the cytosol and interacts with CGAS, leading to activate the cGAS-STING signaling pathway, triggering type-I interferon production. This Mus musculus (Mouse) protein is Polyglutamine-binding protein 1 (Pqbp1).